The chain runs to 386 residues: Ovalbumin (386 aa).

N-acetylglycine is present on G2. S69 bears the Phosphoserine mark. C74 and C121 are oxidised to a cystine. N-linked (GlcNAc...) asparagine glycosylation is present at N293. Position 345 is a phosphoserine (S345).

It belongs to the serpin family. Ov-serpin subfamily. In terms of processing, the N-terminus is blocked.

It localises to the secreted. In terms of biological role, storage protein of egg white. Lacks protease inhibitory activity. The protein is Ovalbumin (SERPINB14) of Dromaius novaehollandiae (Emu).